An 824-amino-acid polypeptide reads, in one-letter code: Leucine--tRNA ligase (824 aa).

The short motif at 41-51 (PYPSGTLHVGH) is the 'HIGH' region element. The 'KMSKS' region motif lies at 580–584 (KMSKS). Lys-583 provides a ligand contact to ATP.

The protein belongs to the class-I aminoacyl-tRNA synthetase family.

The protein localises to the cytoplasm. The catalysed reaction is tRNA(Leu) + L-leucine + ATP = L-leucyl-tRNA(Leu) + AMP + diphosphate. The protein is Leucine--tRNA ligase of Thermotoga petrophila (strain ATCC BAA-488 / DSM 13995 / JCM 10881 / RKU-1).